The sequence spans 680 residues: WD repeat-containing protein 48 homolog (680 aa).

WD repeat units lie at residues 26–65 (QHRNGVNSLQLDPNNGKLYSAGRDAIIRVWNTRSESSEKY), 71–110 (HHNDWVNDIVLCCNGRNLISASCDTTVKVWNAQKGFCMST), 113–152 (THRDYVQALAYAKDREQVASAGLDKAIFLWDVNTLTALTA), 164–203 (GSKDSIYSLAMNPSGTVIVSGSTENILRIWDPRTCMRSMK), 206–245 (GHTENVRCLVVSPDGNQVVSGSSDGTIKVWNLGQQRCVQT), 248–287 (VHKEGVWSLLMSENFQYIISGSRDQNIIVTEMRNPSNKTL), 290–329 (EEKAPVLSLGYNMDKTGVWATTWNSDIRCWKLPMYDRGTL), and 350–389 (KGGAAIKECTVLNDKRYILTKDSQDQVVLYDVLRVVKKDT). The tract at residues 594–618 (TPSGANANNSLQNSQSDGNSEGSQL) is disordered. The segment covering 596 to 609 (SGANANNSLQNSQS) has biased composition (low complexity).

This sequence belongs to the WD repeat WDR48 family. As to quaternary structure, catalytic component of the Usp12-46 deubiquitylase complex consisting of Usp12-46, Wdr20 and Uaf1; regulatory subunit that, together wtih Wdr20, stabilizes Usp12-46. The Usp12-46 deubiquitylase complex associates with arr/arrow; the interaction leads to deubiquitination and stabilization of arr/arrow.

Regulatory component of the Usp12-46 deubiquitylase complex. activates deubiquitination by increasing the catalytic turnover without increasing the affinity of deubiquitinating enzymes for the substrate. The complex deubiquitylates the wg/wingless-signaling receptor arr/arrow, which stabilizes the receptor and increases its concentration at the cell surface; this enhances the sensitivity of cells to wg/wingless-signal stimulation. This increases the amplitude and spatial range of the signaling response to the wg/wingless morphogen gradient, facilitating the precise concentration-dependent regulation of its target genes. Together with Wdr20 and Usp12-46 required for wg/wingless-mediated signaling in the wing imaginal disc and for wg/wingless-dependent regulation of intestinal stem cell proliferation. The chain is WD repeat-containing protein 48 homolog from Drosophila persimilis (Fruit fly).